Reading from the N-terminus, the 179-residue chain is Plasmid-derived single-stranded DNA-binding protein (179 aa).

Residues 6–110 (INKVILVGRL…ILVKTTGTMQ (105 aa)) enclose the SSB domain. A DNA-binding region spans residues 55-61 (WHRVVLF). The disordered stretch occupies residues 117–179 (GAQTQPEEGQ…DYGFSDDIPF (63 aa)). Polar residues predominate over residues 118–132 (AQTQPEEGQQFSGQP). The span at 145 to 155 (GGAKTKGRGRK) shows a compositional bias: basic residues. A compositionally biased stretch (acidic residues) spans 167-179 (EGDDYGFSDDIPF).

Homotetramer.

In terms of biological role, may contribute to the conjugative processing of DNA. It has a functional relationship with Psi (plasmid-mediated sos inhibition) proteins. This chain is Plasmid-derived single-stranded DNA-binding protein (ssbF), found in Escherichia coli (strain K12).